Reading from the N-terminus, the 503-residue chain is Trehalose-6-phosphate synthase (503 aa).

The span at 1–14 shows a compositional bias: polar residues; the sequence is MTDQSGNGVRSGSA. The tract at residues 1–20 is disordered; it reads MTDQSGNGVRSGSASEAPPS. Arginine 31 serves as a coordination point for D-glucose 6-phosphate. 51 to 52 serves as a coordination point for UDP-alpha-D-glucose; the sequence is GG. Tyrosine 109 and aspartate 163 together coordinate D-glucose 6-phosphate. Residues arginine 305 and lysine 310 each contribute to the UDP-alpha-D-glucose site. Arginine 343 contributes to the D-glucose 6-phosphate binding site. 408–412 lines the UDP-alpha-D-glucose pocket; sequence LVAKE.

It belongs to the glycosyltransferase 20 family. As to quaternary structure, homotetramer.

The catalysed reaction is ADP-alpha-D-glucose + D-glucose 6-phosphate = alpha,alpha-trehalose 6-phosphate + ADP + H(+). It carries out the reaction CDP-alpha-D-glucose + D-glucose 6-phosphate = alpha,alpha-trehalose 6-phosphate + CDP + H(+). The enzyme catalyses GDP-alpha-D-glucose + D-glucose 6-phosphate = alpha,alpha-trehalose 6-phosphate + GDP + H(+). It catalyses the reaction TDP-alpha-D-glucose + D-glucose 6-phosphate = 5-methyl-UDP + alpha,alpha-trehalose 6-phosphate + H(+). The catalysed reaction is D-glucose 6-phosphate + UDP-alpha-D-glucose = alpha,alpha-trehalose 6-phosphate + UDP + H(+). It participates in glycan biosynthesis; trehalose biosynthesis. Its function is as follows. Probably involved in the osmoprotection via the biosynthesis of trehalose and in the production of glycogen and alpha-glucan via the TreS-Pep2 branch involved in the biosynthesis of maltose-1-phosphate (M1P). Catalyzes the transfer of glucose from UDP-glucose (UDP-Glc) to D-glucose 6-phosphate (Glc-6-P) to form trehalose-6-phosphate. Probably also able to use ADP-Glc, CDP-Glc, GDP-Glc and TDP-Glc as glucosyl donors. The protein is Trehalose-6-phosphate synthase of Mycolicibacterium gilvum (strain PYR-GCK) (Mycobacterium gilvum (strain PYR-GCK)).